We begin with the raw amino-acid sequence, 365 residues long: Glycerol dehydrogenase (365 aa).

The NAD(+) site is built by D37, G94, K95, T116, and S119. Glycerol is bound at residue D121. Positions 125, 127, and 131 each coordinate NAD(+). Mn(2+)-binding residues include D171, H254, and H271. Residue H254 coordinates glycerol.

Belongs to the iron-containing alcohol dehydrogenase family. In terms of assembly, homohexamer. Mn(2+) is required as a cofactor.

It carries out the reaction glycerol + NAD(+) = dihydroxyacetone + NADH + H(+). The catalysed reaction is hydroxyacetone + NADH + H(+) = (S)-propane-1,2-diol + NAD(+). It functions in the pathway polyol metabolism; glycerol fermentation; glycerone phosphate from glycerol (oxidative route): step 1/2. Inhibited by zinc. Its function is as follows. Catalyzes the NAD-dependent oxidation of glycerol to dihydroxyacetone (glycerone). Allows microorganisms to utilize glycerol as a source of carbon under anaerobic conditions. Exhibits a rather broad substrate specificity since it can also oxidize 1,2-propanediol and 2,3-butanediol and reduce dihydroxyacetone. Cannot use NADP(+) as an electron acceptor for the oxidation of glycerol. This Citrobacter freundii protein is Glycerol dehydrogenase.